The following is a 64-amino-acid chain: Large ribosomal subunit protein bL32 (64 aa).

The segment covering 1-10 (MAVPKRKTTP) has biased composition (basic residues). A disordered region spans residues 1-22 (MAVPKRKTTPSKRDMRRANHDK). Residues 11-22 (SKRDMRRANHDK) are compositionally biased toward basic and acidic residues.

The protein belongs to the bacterial ribosomal protein bL32 family.

The sequence is that of Large ribosomal subunit protein bL32 from Sorangium cellulosum (strain So ce56) (Polyangium cellulosum (strain So ce56)).